A 41-amino-acid polypeptide reads, in one-letter code: Photosystem II reaction center protein J (41 aa).

The helical transmembrane segment at 9 to 29 (IPLWFVGMVGGLAALGLLAIF) threads the bilayer.

This sequence belongs to the PsbJ family. As to quaternary structure, PSII is composed of 1 copy each of membrane proteins PsbA, PsbB, PsbC, PsbD, PsbE, PsbF, PsbH, PsbI, PsbJ, PsbK, PsbL, PsbM, PsbT, PsbX, PsbY, PsbZ, Psb30/Ycf12, at least 3 peripheral proteins of the oxygen-evolving complex and a large number of cofactors. It forms dimeric complexes.

The protein resides in the plastid. The protein localises to the chloroplast thylakoid membrane. In terms of biological role, one of the components of the core complex of photosystem II (PSII). PSII is a light-driven water:plastoquinone oxidoreductase that uses light energy to abstract electrons from H(2)O, generating O(2) and a proton gradient subsequently used for ATP formation. It consists of a core antenna complex that captures photons, and an electron transfer chain that converts photonic excitation into a charge separation. The sequence is that of Photosystem II reaction center protein J from Ostreococcus tauri.